The primary structure comprises 142 residues: Large ribosomal subunit protein uL11 (142 aa).

It belongs to the universal ribosomal protein uL11 family. Part of the ribosomal stalk of the 50S ribosomal subunit. Interacts with L10 and the large rRNA to form the base of the stalk. L10 forms an elongated spine to which L12 dimers bind in a sequential fashion forming a multimeric L10(L12)X complex. Post-translationally, one or more lysine residues are methylated.

In terms of biological role, forms part of the ribosomal stalk which helps the ribosome interact with GTP-bound translation factors. The protein is Large ribosomal subunit protein uL11 of Desulfitobacterium hafniense (strain DSM 10664 / DCB-2).